Here is a 203-residue protein sequence, read N- to C-terminus: Holliday junction branch migration complex subunit RuvA (203 aa).

The interval 1 to 63 (MIFSVRGEVL…EDSMTLYGFS (63 aa)) is domain I. The tract at residues 64 to 141 (DAENRDLFLA…GPVGASGLTV (78 aa)) is domain II. The flexible linker stretch occupies residues 141 to 145 (VGTAA). Residues 146–203 (DGNAVRGSVVEALVGLGFAAKQAEEATDQVLDGELGKDGAVATSSALRAALSLLGKTR) form a domain III region.

This sequence belongs to the RuvA family. In terms of assembly, homotetramer. Forms an RuvA(8)-RuvB(12)-Holliday junction (HJ) complex. HJ DNA is sandwiched between 2 RuvA tetramers; dsDNA enters through RuvA and exits via RuvB. An RuvB hexamer assembles on each DNA strand where it exits the tetramer. Each RuvB hexamer is contacted by two RuvA subunits (via domain III) on 2 adjacent RuvB subunits; this complex drives branch migration. In the full resolvosome a probable DNA-RuvA(4)-RuvB(12)-RuvC(2) complex forms which resolves the HJ.

It localises to the cytoplasm. Its function is as follows. The RuvA-RuvB-RuvC complex processes Holliday junction (HJ) DNA during genetic recombination and DNA repair, while the RuvA-RuvB complex plays an important role in the rescue of blocked DNA replication forks via replication fork reversal (RFR). RuvA specifically binds to HJ cruciform DNA, conferring on it an open structure. The RuvB hexamer acts as an ATP-dependent pump, pulling dsDNA into and through the RuvAB complex. HJ branch migration allows RuvC to scan DNA until it finds its consensus sequence, where it cleaves and resolves the cruciform DNA. The chain is Holliday junction branch migration complex subunit RuvA from Mycobacterium leprae (strain Br4923).